The primary structure comprises 209 residues: Uracil phosphoribosyltransferase (209 aa).

Residues arginine 77, arginine 102, and 129 to 137 contribute to the 5-phospho-alpha-D-ribose 1-diphosphate site; that span reads DPMLATGVS. Residues isoleucine 192 and 197 to 199 contribute to the uracil site; that span reads GDA. Aspartate 198 contributes to the 5-phospho-alpha-D-ribose 1-diphosphate binding site.

It belongs to the UPRTase family. Mg(2+) serves as cofactor.

The enzyme catalyses UMP + diphosphate = 5-phospho-alpha-D-ribose 1-diphosphate + uracil. Its pathway is pyrimidine metabolism; UMP biosynthesis via salvage pathway; UMP from uracil: step 1/1. With respect to regulation, allosterically activated by GTP. Functionally, catalyzes the conversion of uracil and 5-phospho-alpha-D-ribose 1-diphosphate (PRPP) to UMP and diphosphate. The protein is Uracil phosphoribosyltransferase of Metamycoplasma arthritidis (strain 158L3-1) (Mycoplasma arthritidis).